A 374-amino-acid chain; its full sequence is Chaperone protein DnaJ (374 aa).

The 66-residue stretch at Asp-6–Gly-71 folds into the J domain. The CR-type zinc-finger motif lies at Gly-130–Glu-209. Residues Cys-143, Cys-146, Cys-161, Cys-164, Cys-183, Cys-186, Cys-197, and Cys-200 each contribute to the Zn(2+) site. CXXCXGXG motif repeat units lie at residues Cys-143–Gly-150, Cys-161–Gly-168, Cys-183–Gly-190, and Cys-197–Gly-204.

This sequence belongs to the DnaJ family. In terms of assembly, homodimer. Zn(2+) serves as cofactor.

The protein localises to the cytoplasm. Functionally, participates actively in the response to hyperosmotic and heat shock by preventing the aggregation of stress-denatured proteins and by disaggregating proteins, also in an autonomous, DnaK-independent fashion. Unfolded proteins bind initially to DnaJ; upon interaction with the DnaJ-bound protein, DnaK hydrolyzes its bound ATP, resulting in the formation of a stable complex. GrpE releases ADP from DnaK; ATP binding to DnaK triggers the release of the substrate protein, thus completing the reaction cycle. Several rounds of ATP-dependent interactions between DnaJ, DnaK and GrpE are required for fully efficient folding. Also involved, together with DnaK and GrpE, in the DNA replication of plasmids through activation of initiation proteins. This Gluconacetobacter diazotrophicus (strain ATCC 49037 / DSM 5601 / CCUG 37298 / CIP 103539 / LMG 7603 / PAl5) protein is Chaperone protein DnaJ.